The sequence spans 235 residues: Maximins-S type A (235 aa).

The signal sequence occupies residues 1–18 (MNFNYFILVLFFITSGHA). Propeptides lie at residues 19–35 (KSET…HIKR) and 52–65 (SAEE…LVKR). Asn83 bears the Asparagine amide mark. Positions 87 to 100 (SAEEQDLAEDLVTR) are excised as a propeptide. Asn118 is modified (asparagine amide). Positions 122-135 (SAEEQDLAEDLVKR) are excised as a propeptide. Asn153 is subject to Asparagine amide. The propeptide occupies 157–170 (SAEEQDLAEDLVTR). Lys188 carries the lysine amide modification. A propeptide spanning residues 192-205 (SAEDQDLAEDLVTR) is cleaved from the precursor. Lys223 carries the lysine amide modification. The propeptide occupies 227 to 235 (SAEQEKDMK).

This sequence belongs to the maximin-S family. Expressed by the skin dorsal glands.

Its subcellular location is the secreted. Functionally, maximin-S1 has no antimicrobial activity. Has no hemolytic activity. Its function is as follows. Maximin-S2 has an activity against mycoplasma but has no activity against common Gram-positive and Gram-negative bacteria nor fungi. Has no hemolytic activity. Maximin-S3 has an activity against mycoplasma but has no activity against common Gram-positive and Gram-negative bacteria nor fungi. Has no hemolytic activity. In terms of biological role, maximin-S4 has an activity against mycoplasma but has no activity against common Gram-positive and Gram-negative bacteria nor fungi. Has no hemolytic activity. Functionally, maximin-S5 has an activity against mycoplasma but has no activity against common Gram-positive and Gram-negative bacteria nor fungi. Has no hemolytic activity. The sequence is that of Maximins-S type A from Bombina maxima (Giant fire-bellied toad).